Consider the following 283-residue polypeptide: Bifunctional protein FolD (283 aa).

Residues 159-161 (GRS), serine 184, and isoleucine 225 contribute to the NADP(+) site.

Belongs to the tetrahydrofolate dehydrogenase/cyclohydrolase family. Homodimer.

The catalysed reaction is (6R)-5,10-methylene-5,6,7,8-tetrahydrofolate + NADP(+) = (6R)-5,10-methenyltetrahydrofolate + NADPH. It catalyses the reaction (6R)-5,10-methenyltetrahydrofolate + H2O = (6R)-10-formyltetrahydrofolate + H(+). It functions in the pathway one-carbon metabolism; tetrahydrofolate interconversion. Its function is as follows. Catalyzes the oxidation of 5,10-methylenetetrahydrofolate to 5,10-methenyltetrahydrofolate and then the hydrolysis of 5,10-methenyltetrahydrofolate to 10-formyltetrahydrofolate. This chain is Bifunctional protein FolD, found in Methanoculleus marisnigri (strain ATCC 35101 / DSM 1498 / JR1).